We begin with the raw amino-acid sequence, 327 residues long: Arabinose 5-phosphate isomerase KdsD (327 aa).

The SIS domain occupies 41–183 (ILENNRDKSR…AIALLKAKNF (143 aa)). Residues 74–75 (GT), histidine 81, histidine 87, 113–122 (GLLPMIKHLD), 147–149 (HVD), threonine 221, and glutamate 273 contribute to the substrate site. Zn(2+) is bound at residue histidine 81. The 60-residue stretch at 209-268 (MRKGNEIPIVKPTDNIRKAILEISDKGVGNTLVAENNTLLGIFTDGDLRRMFEAESFNSQ) folds into the CBS 1 domain. The CBS 2 domain maps to 275–327 (MTKNPKSISKEEMAITALEKMEKYEITSLAVVDNGHNILGIVTMHDLIKLELR).

Belongs to the SIS family. GutQ/KpsF subfamily. Homotetramer.

It catalyses the reaction D-arabinose 5-phosphate = D-ribulose 5-phosphate. The protein operates within carbohydrate biosynthesis; 3-deoxy-D-manno-octulosonate biosynthesis; 3-deoxy-D-manno-octulosonate from D-ribulose 5-phosphate: step 1/3. It functions in the pathway bacterial outer membrane biogenesis; lipopolysaccharide biosynthesis. With respect to regulation, inhibited by hydroxamates, mimicking the putative enediol reaction intermediate. Most potent inhibition, with an IC(50) of 0.7 uM, is obtained with the 4 carbon-based hydroxamate containing acetyl moieties. Involved in the biosynthesis of 3-deoxy-D-manno-octulosonate (KDO), a unique 8-carbon sugar component of lipopolysaccharides (LPSs). Catalyzes the reversible aldol-ketol isomerization between D-ribulose 5-phosphate (Ru5P) and D-arabinose 5-phosphate (A5P). This Francisella tularensis subsp. tularensis (strain SCHU S4 / Schu 4) protein is Arabinose 5-phosphate isomerase KdsD (kdsD).